We begin with the raw amino-acid sequence, 246 residues long: Ribonuclease 3 (246 aa).

Residues 10-143 enclose the RNase III domain; the sequence is LERLEQALDY…LLGAIYLDGG (134 aa). Position 56 (Glu56) interacts with Mg(2+). Asp60 is a catalytic residue. Residues Asn129 and Glu132 each contribute to the Mg(2+) site. Glu132 is a catalytic residue. A DRBM domain is found at 170 to 239; sequence DYKTLLQEYL…AQQALELLIE (70 aa).

The protein belongs to the ribonuclease III family. In terms of assembly, homodimer. Requires Mg(2+) as cofactor.

It is found in the cytoplasm. It carries out the reaction Endonucleolytic cleavage to 5'-phosphomonoester.. Functionally, digests double-stranded RNA. Involved in the processing of primary rRNA transcript to yield the immediate precursors to the large and small rRNAs (23S and 16S). Processes some mRNAs, and tRNAs when they are encoded in the rRNA operon. Processes pre-crRNA and tracrRNA of type II CRISPR loci if present in the organism. The chain is Ribonuclease 3 from Magnetococcus marinus (strain ATCC BAA-1437 / JCM 17883 / MC-1).